Reading from the N-terminus, the 257-residue chain is 14-3-3-like protein GF14-G (257 aa).

It belongs to the 14-3-3 family.

Its function is as follows. Is associated with a DNA binding complex that binds to the G box, a well-characterized cis-acting DNA regulatory element found in plant genes. This Oryza sativa subsp. japonica (Rice) protein is 14-3-3-like protein GF14-G (GF14G).